A 699-amino-acid polypeptide reads, in one-letter code: D-(-)-3-hydroxybutyrate oligomer hydrolase (699 aa).

Residues 1–33 form the signal peptide; the sequence is MTAIRGGSRRAPGLALALLGGVLLGACHGDENA. Serine 311 acts as the Charge relay system in catalysis.

This sequence belongs to the D-(-)-3-hydroxybutyrate oligomer hydrolase family.

It localises to the secreted. It carries out the reaction (3R)-hydroxybutanoate dimer + H2O = 2 (R)-3-hydroxybutanoate + H(+). It participates in lipid metabolism; butanoate metabolism. Participates in the degradation of poly-3-hydroxybutyrate (PHB). It works downstream of poly(3-hydroxybutyrate) depolymerase, hydrolyzing D(-)-3-hydroxybutyrate oligomers of various length (3HB-oligomers) into 3HB-monomers. This Burkholderia mallei (strain ATCC 23344) protein is D-(-)-3-hydroxybutyrate oligomer hydrolase.